The following is a 130-amino-acid chain: kinetoplast-associated protein 2-1 (130 aa).

Positions 1-10 are excised as a propeptide; that stretch reads MLRRTVSNFA. The interval 89-130 is disordered; the sequence is LTKKWNETKQAQREKAQKAQKKTKSAKSKVKKAAKKSKKSKK. Residues 92 to 105 show a composition bias toward basic and acidic residues; it reads KWNETKQAQREKAQ. Residues 106-130 show a composition bias toward basic residues; that stretch reads KAQKKTKSAKSKVKKAAKKSKKSKK.

It belongs to the KAP family. As to quaternary structure, associates with the kinetoplast DNA network.

It localises to the mitochondrion matrix. The protein localises to the kinetoplast. In terms of biological role, histone H1-like DNA-binding protein involved in the organization and segregation of kinetoplast DNA (kDNA). The mitochondrial DNA of kinetoplastid protozoa consists of about 5,000 minicircles and 20 to 30 maxicircles. These circular DNAs are held together by catenation into a highly organized compact disk structure referred to as a kinetoplast DNA (kDNA) network. Binds preferentially to a specific fragment of minicircle DNA and is able to compact kDNA networks through DNA charge neutralization and condensation. This chain is kinetoplast-associated protein 2-1 (KAP2-1), found in Crithidia fasciculata.